The following is a 247-amino-acid chain: tRNA uridine(34) hydroxylase (247 aa).

The 95-residue stretch at 124–218 (TKQNVIVIDT…YLEDTQNKNN (95 aa)) folds into the Rhodanese domain. Cys-178 acts as the Cysteine persulfide intermediate in catalysis.

It belongs to the TrhO family.

It catalyses the reaction uridine(34) in tRNA + AH2 + O2 = 5-hydroxyuridine(34) in tRNA + A + H2O. In terms of biological role, catalyzes oxygen-dependent 5-hydroxyuridine (ho5U) modification at position 34 in tRNAs. In Rickettsia akari (strain Hartford), this protein is tRNA uridine(34) hydroxylase.